The following is a 212-amino-acid chain: Large ribosomal subunit protein uL3 (212 aa).

Glutamine 153 carries the N5-methylglutamine modification.

Belongs to the universal ribosomal protein uL3 family. Part of the 50S ribosomal subunit. Forms a cluster with proteins L14 and L19. In terms of processing, methylated by PrmB.

Its function is as follows. One of the primary rRNA binding proteins, it binds directly near the 3'-end of the 23S rRNA, where it nucleates assembly of the 50S subunit. This Azoarcus sp. (strain BH72) protein is Large ribosomal subunit protein uL3.